Reading from the N-terminus, the 343-residue chain is N-acetyl-gamma-glutamyl-phosphate reductase (343 aa).

Cys146 is a catalytic residue.

This sequence belongs to the NAGSA dehydrogenase family. Type 1 subfamily.

It localises to the cytoplasm. The catalysed reaction is N-acetyl-L-glutamate 5-semialdehyde + phosphate + NADP(+) = N-acetyl-L-glutamyl 5-phosphate + NADPH + H(+). Its pathway is amino-acid biosynthesis; L-arginine biosynthesis; N(2)-acetyl-L-ornithine from L-glutamate: step 3/4. Catalyzes the NADPH-dependent reduction of N-acetyl-5-glutamyl phosphate to yield N-acetyl-L-glutamate 5-semialdehyde. This is N-acetyl-gamma-glutamyl-phosphate reductase from Acidothermus cellulolyticus (strain ATCC 43068 / DSM 8971 / 11B).